We begin with the raw amino-acid sequence, 415 residues long: Gamma-glutamyl phosphate reductase (415 aa).

Belongs to the gamma-glutamyl phosphate reductase family.

Its subcellular location is the cytoplasm. It catalyses the reaction L-glutamate 5-semialdehyde + phosphate + NADP(+) = L-glutamyl 5-phosphate + NADPH + H(+). The protein operates within amino-acid biosynthesis; L-proline biosynthesis; L-glutamate 5-semialdehyde from L-glutamate: step 2/2. In terms of biological role, catalyzes the NADPH-dependent reduction of L-glutamate 5-phosphate into L-glutamate 5-semialdehyde and phosphate. The product spontaneously undergoes cyclization to form 1-pyrroline-5-carboxylate. In Bacillus velezensis (strain DSM 23117 / BGSC 10A6 / LMG 26770 / FZB42) (Bacillus amyloliquefaciens subsp. plantarum), this protein is Gamma-glutamyl phosphate reductase.